Reading from the N-terminus, the 454-residue chain is tRNA modification GTPase MnmE (454 aa).

(6S)-5-formyl-5,6,7,8-tetrahydrofolate-binding residues include R23, E80, and K120. The 162-residue stretch at 216–377 (GMKVVIAGRP…LRDHLKQSMG (162 aa)) folds into the TrmE-type G domain. Position 226 (N226) interacts with K(+). GTP contacts are provided by residues 226–231 (NAGKSS), 245–251 (TDIAGTT), 270–273 (DTAG), 335–338 (NKAD), and 358–360 (SAR). Residue S230 coordinates Mg(2+). 3 residues coordinate K(+): T245, I247, and T250. A Mg(2+)-binding site is contributed by T251. K454 is a binding site for (6S)-5-formyl-5,6,7,8-tetrahydrofolate.

It belongs to the TRAFAC class TrmE-Era-EngA-EngB-Septin-like GTPase superfamily. TrmE GTPase family. In terms of assembly, homodimer. Heterotetramer of two MnmE and two MnmG subunits. Requires K(+) as cofactor.

The protein localises to the cytoplasm. Functionally, exhibits a very high intrinsic GTPase hydrolysis rate. Involved in the addition of a carboxymethylaminomethyl (cmnm) group at the wobble position (U34) of certain tRNAs, forming tRNA-cmnm(5)s(2)U34. This Yersinia pseudotuberculosis serotype O:1b (strain IP 31758) protein is tRNA modification GTPase MnmE.